The chain runs to 351 residues: S-adenosylmethionine:tRNA ribosyltransferase-isomerase (351 aa).

Belongs to the QueA family. As to quaternary structure, monomer.

The protein localises to the cytoplasm. It carries out the reaction 7-aminomethyl-7-carbaguanosine(34) in tRNA + S-adenosyl-L-methionine = epoxyqueuosine(34) in tRNA + adenine + L-methionine + 2 H(+). The protein operates within tRNA modification; tRNA-queuosine biosynthesis. Its function is as follows. Transfers and isomerizes the ribose moiety from AdoMet to the 7-aminomethyl group of 7-deazaguanine (preQ1-tRNA) to give epoxyqueuosine (oQ-tRNA). The protein is S-adenosylmethionine:tRNA ribosyltransferase-isomerase of Hyphomonas neptunium (strain ATCC 15444).